A 131-amino-acid chain; its full sequence is Ribonuclease P protein component (131 aa).

It belongs to the RnpA family. Consists of a catalytic RNA component (M1 or rnpB) and a protein subunit.

The enzyme catalyses Endonucleolytic cleavage of RNA, removing 5'-extranucleotides from tRNA precursor.. In terms of biological role, RNaseP catalyzes the removal of the 5'-leader sequence from pre-tRNA to produce the mature 5'-terminus. It can also cleave other RNA substrates such as 4.5S RNA. The protein component plays an auxiliary but essential role in vivo by binding to the 5'-leader sequence and broadening the substrate specificity of the ribozyme. The polypeptide is Ribonuclease P protein component (Stutzerimonas stutzeri (strain A1501) (Pseudomonas stutzeri)).